We begin with the raw amino-acid sequence, 718 residues long: Coiled-coil domain-containing protein 157 (718 aa).

Residues 300–603 (LRAQLEDAEG…LTKIREVAQQ (304 aa)) are a coiled coil. Positions 469–482 (RGSLDEAEAQRSEL) are enriched in basic and acidic residues. 2 disordered regions span residues 469–490 (RGSLDEAEAQRSELEEQLQSLQ) and 617–690 (PPYK…TQNP). Residues 639–659 (TGRRQSPGSRTSSTGRTHPGG) are compositionally biased toward low complexity.

This chain is Coiled-coil domain-containing protein 157 (Ccdc157), found in Mus musculus (Mouse).